The following is a 456-amino-acid chain: Methylenetetrahydrofolate--tRNA-(uracil-5-)-methyltransferase TrmFO (456 aa).

An FAD-binding site is contributed by 11–16 (GGGLAG).

Belongs to the MnmG family. TrmFO subfamily. FAD is required as a cofactor.

It localises to the cytoplasm. The enzyme catalyses uridine(54) in tRNA + (6R)-5,10-methylene-5,6,7,8-tetrahydrofolate + NADH + H(+) = 5-methyluridine(54) in tRNA + (6S)-5,6,7,8-tetrahydrofolate + NAD(+). It catalyses the reaction uridine(54) in tRNA + (6R)-5,10-methylene-5,6,7,8-tetrahydrofolate + NADPH + H(+) = 5-methyluridine(54) in tRNA + (6S)-5,6,7,8-tetrahydrofolate + NADP(+). Catalyzes the folate-dependent formation of 5-methyl-uridine at position 54 (M-5-U54) in all tRNAs. The protein is Methylenetetrahydrofolate--tRNA-(uracil-5-)-methyltransferase TrmFO of Synechocystis sp. (strain ATCC 27184 / PCC 6803 / Kazusa).